The following is a 353-amino-acid chain: Ribosomal RNA small subunit methyltransferase (353 aa).

A compositionally biased stretch (basic residues) spans 1–10 (MAGGKIRKEK). A disordered region spans residues 1-23 (MAGGKIRKEKPKASNRAPSNHYQ). Positions 35, 37, 62, 83, 111, and 126 each coordinate S-adenosyl-L-methionine. The interval 270 to 313 (ALNTTSMDLGDQSMGMEDDDNEMDDDDMEMDEGEGDGGETSEFK) is disordered. A compositionally biased stretch (acidic residues) spans 285–308 (MEDDDNEMDDDDMEMDEGEGDGGE).

Belongs to the class I-like SAM-binding methyltransferase superfamily. rRNA adenine N(6)-methyltransferase family. In terms of tissue distribution, expressed in rapidly dividing tissues, including root meristems and lateral root primordia, developing cotyledons and leaves, petals, anther, pollen grains and silique abscission zone.

Its subcellular location is the nucleus. The protein localises to the nucleolus. It catalyses the reaction adenosine(1785)/adenosine(1786) in 18S rRNA + 4 S-adenosyl-L-methionine = N(6)-dimethyladenosine(1785)/N(6)-dimethyladenosine(1786) in 18S rRNA + 4 S-adenosyl-L-homocysteine + 4 H(+). In terms of biological role, N6-adenine methyltransferase which modifies the AA dinucleotide at the plant nuclear 18S rRNA nucleotides A1785 and A1786. Required for generating appropriate patterns of gene expression during root development, including the cell-specific expression of transcriptional regulators involved in root hair and non-hair cells patterning. This Arabidopsis thaliana (Mouse-ear cress) protein is Ribosomal RNA small subunit methyltransferase.